The chain runs to 1656 residues: Probable phospholipid-transporting ATPase DNF3 (1656 aa).

Topologically, residues 1 to 164 are lumenal; that stretch reads MGIADGQRRR…PRQLYAQFSK (164 aa). The interval 36–74 is disordered; that stretch reads ELEDINESKTFSGSDNNDKDDRDETSGNYAAEEDYEMEE. Basic and acidic residues predominate over residues 51 to 60; sequence NNDKDDRDET. The helical transmembrane segment at 165 to 185 threads the bilayer; it reads LANTYFFIVAVLQMIPGWSTT. Residues 186-451 are Cytoplasmic-facing; sequence GTYTTIIPLC…RTKAPKLQRK (266 aa). Residues 452 to 472 form a helical membrane-spanning segment; that stretch reads INMIIVFMVFVVATISLFSYL. The Lumenal portion of the chain corresponds to 473–495; the sequence is GHVLHKKKYIDQNKAWYLFQADA. The helical transmembrane segment at 496 to 516 threads the bilayer; sequence GVAPTIMSFIIMYNTVIPLSL. Residues 517 to 1157 lie on the Cytoplasmic side of the membrane; the sequence is YVTMEIIKVV…ISKMNAVSQE (641 aa). The active-site 4-aspartylphosphate intermediate is Asp566. ATP is bound by residues Asp566, Lys567, and Thr568. Asp566 contributes to the Mg(2+) binding site. Residue Thr568 coordinates Mg(2+). Ser627 is modified (phosphoserine). Residues Glu765, Phe813, Ser815, Lys818, Lys838, Arg1034, Thr1035, Thr1114, Gly1115, Asp1116, 1167 to 1174, Arg1202, and Lys1208 each bind ATP; that span reads VVVIDGAT. A helical transmembrane segment spans residues 1158 to 1178; that stretch reads VDSGNIAHCVVVIDGATMAMF. Residues 1179-1318 are Lumenal-facing; it reads EGNPTYMSVF…MFSGSSLYEP (140 aa). Mg(2+) is bound at residue Asp1229. Residues Asn1232 and Asp1233 each contribute to the ATP site. The chain crosses the membrane as a helical span at residues 1319–1339; it reads WSLSMFNTLFTSLPVLCIGMF. Topologically, residues 1340–1365 are cytoplasmic; that stretch reads EKDLKPMTLLTVPELYSYGRLSQGFN. A helical membrane pass occupies residues 1366–1386; that stretch reads WLIFMEWVILATTNSLIITFL. The Lumenal portion of the chain corresponds to 1387–1395; the sequence is NVVMWGMSS. Residues 1396 to 1416 form a helical membrane-spanning segment; sequence LSDNTMYPLGLINFTAIVALI. Residues 1417–1432 lie on the Cytoplasmic side of the membrane; it reads NVKSQFVEMHNRNWLA. A helical membrane pass occupies residues 1433 to 1453; it reads FTSVVLSCGGWLVWCCALPIL. Residues 1454–1473 are Lumenal-facing; sequence NNTDQIYDVAYGFYNHFGKD. Residues 1474 to 1494 form a helical membrane-spanning segment; the sequence is ITFWCTSLVLALLPITLDIVY. The Cytoplasmic segment spans residues 1495-1656; it reads KTFKVMIWPS…IIQARLKDLE (162 aa). A disordered region spans residues 1554–1576; that stretch reads PRTNSRASAKTHNSSIYSMSNGN.

The protein belongs to the cation transport ATPase (P-type) (TC 3.A.3) family. Type IV subfamily. In terms of assembly, component of a flippase complex consisting of DNF3 and YNR048W/CRF1. Interacts with YNR048W/CRF1; the interaction is direct and required for proper expression and endoplasmic reticulum (ER) export of either partner. Requires Mg(2+) as cofactor.

It localises to the golgi apparatus. It is found in the trans-Golgi network membrane. The protein localises to the endosome membrane. The catalysed reaction is ATP + H2O + phospholipidSide 1 = ADP + phosphate + phospholipidSide 2.. It carries out the reaction a 1,2-diacyl-sn-glycero-3-phosphocholine(out) + ATP + H2O = a 1,2-diacyl-sn-glycero-3-phosphocholine(in) + ADP + phosphate + H(+). It catalyses the reaction a 1,2-diacyl-sn-glycero-3-phosphoethanolamine(out) + ATP + H2O = a 1,2-diacyl-sn-glycero-3-phosphoethanolamine(in) + ADP + phosphate + H(+). Catalytic component of a P4-ATPase flippase complex which catalyzes the hydrolysis of ATP coupled to the transport of phosphatidylcholine and small amounts of phosphatidylethanolamine from the lumen to the cytosolic leaflet of the trans-Golgi network and ensures the maintenance of asymmetric distribution of phospholipids. May be involved in transport from early endosomes to the trans-Golgi network (TGN). The chain is Probable phospholipid-transporting ATPase DNF3 (DNF3) from Saccharomyces cerevisiae (strain ATCC 204508 / S288c) (Baker's yeast).